The sequence spans 799 residues: Ribosome-releasing factor 2, mitochondrial (799 aa).

The 288-residue stretch at S19 to L306 folds into the tr-type G domain. GTP-binding positions include A28–T35, D93–H97, and N145–D148.

Belongs to the TRAFAC class translation factor GTPase superfamily. Classic translation factor GTPase family. EF-G/EF-2 subfamily.

Its subcellular location is the mitochondrion. Its function is as follows. Mitochondrial GTPase that mediates the disassembly of ribosomes from messenger RNA at the termination of mitochondrial protein biosynthesis. Not involved in the GTP-dependent ribosomal translocation step during translation elongation. The sequence is that of Ribosome-releasing factor 2, mitochondrial from Vanderwaltozyma polyspora (strain ATCC 22028 / DSM 70294 / BCRC 21397 / CBS 2163 / NBRC 10782 / NRRL Y-8283 / UCD 57-17) (Kluyveromyces polysporus).